A 68-amino-acid chain; its full sequence is UPF0253 protein VF_0662 (68 aa).

This sequence belongs to the UPF0253 family.

This chain is UPF0253 protein VF_0662, found in Aliivibrio fischeri (strain ATCC 700601 / ES114) (Vibrio fischeri).